We begin with the raw amino-acid sequence, 687 residues long: Adhesion G-protein coupled receptor G1 (687 aa).

A signal peptide spans 1–25 (MTAQSLLQTTLFLLSLLFLVQGAHG). Heparin is bound at residue 26 to 33 (RGHREDFR). At 26-402 (RGHREDFRFC…VEVDAVHKHY (377 aa)) the chain is on the extracellular side. Disulfide bonds link Cys-35/Cys-91 and Cys-121/Cys-177. 3 N-linked (GlcNAc...) asparagine glycosylation sites follow: Asn-39, Asn-148, and Asn-171. 190-200 (LKHPQKASRRP) contacts heparin. A GAIN-B domain is found at 224-395 (DTVSFEEDRI…AVLMVSSVEV (172 aa)). N-linked (GlcNAc...) asparagine glycans are attached at residues Asn-234, Asn-303, Asn-324, and Asn-341. 2 disulfides stabilise this stretch: Cys-346–Cys-377 and Cys-366–Cys-379. Residues 346-395 (CVFWVEDPTLSSPGHWSSAGCETVRRETQTSCLCNHLTYFAVLMVSSVEV) form a GPS region. A stachel region spans residues 384–397 (YFAVLMVSSVEVDA). Residues 403–423 (LSLLSYVGCVVSALACVVTIA) form a helical membrane-spanning segment. The Cytoplasmic segment spans residues 424–442 (AYLCSRRKPRDYTIKVHMN). The chain crosses the membrane as a helical span at residues 443 to 463 (LLLAVFLLDTSFLLSEPVALT). Residues 464–470 (GSEAGCR) lie on the Extracellular side of the membrane. The chain crosses the membrane as a helical span at residues 471 to 491 (ASAIFLHFSLLACLSWMGLEG). Over 492–512 (YNLYRLVVEVFGTYVPGYLLK) the chain is Cytoplasmic. A helical membrane pass occupies residues 513–533 (LSAMGWGFPIFLVTLVALVDV). Residues 534 to 570 (DNYGPIILAVHRTPEGVIYPSMCWIRDSLVSYITNLG) are Extracellular-facing. A helical transmembrane segment spans residues 571-591 (LFSLVFLFNMAMLATMVVQIL). The Cytoplasmic portion of the chain corresponds to 592 to 603 (RLRPHTQKWSHV). The helical transmembrane segment at 604 to 624 (LTLLGLSLVLGLPWALIFFSF) threads the bilayer. Topologically, residues 625 to 630 (ASGTFQ) are extracellular. A helical transmembrane segment spans residues 631–651 (LVILYLFSIITSFQGFLIFIW). At 652–687 (YWSMRLQARGGPSPLKSNSDSARLPISSGSTSSSRI) the chain is on the cytoplasmic side. A disordered region spans residues 664–687 (SPLKSNSDSARLPISSGSTSSSRI). Over residues 678–687 (SSGSTSSSRI) the composition is skewed to low complexity.

The protein belongs to the G-protein coupled receptor 2 family. LN-TM7 subfamily. As to quaternary structure, heterodimer of 2 chains generated by proteolytic processing; the large extracellular N-terminal fragment (ADGRG1 NT) and the membrane-bound C-terminal fragment (ADGRG1-CT) predominantly remain associated and non-covalently linked. ADGRG1 NT self-associates in a trans-trans manner; the homophilic interaction enhances receptor signaling. Interacts with TGM2. Interacts with heparin; leading to the reduction of ADGRG1 shedding. Interacts with COL3A1. Part of a GPCR-tetraspanin complex at least consisting of ADGRG1, CD81, eventually CD9, and GNA11 in which CD81 is enhancing the association of ADGRG1 with GNA11. In terms of processing, autoproteolytically cleaved into 2 fragments; the large extracellular N-terminal fragment (ADGRG1 NT) and the membrane-bound C-terminal fragment (ADGRG1 CT) predominantly remain associated and non-covalently linked. Shedding to yield the secreted ADGRG1 N-terminal fragment seems to involve metalloprotease(s). Post-translationally, ubiquitinated. Undergoes polyubiquitination upon activation.

The protein localises to the cell membrane. It localises to the secreted. Its subcellular location is the membrane raft. Forms a heterodimer of 2 chains generated by proteolytic processing that remain associated through non-covalent interactions mediated by the GAIN-B domain. In the inactivated receptor, the Stachel sequence (also named stalk) is embedded in the GAIN-B domain, where it adopts a beta-strand conformation. On activation, the Stachel moves into the 7 transmembrane region and adopts a twisted hook-shaped configuration that forms contacts within the receptor, leading to coupling of a G-alpha protein, which activates signaling. The cleaved GAIN-B and N-terminal domains can then dissociate from the rest of the receptor. In terms of biological role, adhesion G-protein coupled receptor (aGPCR) for steroid hormone 17alpha-hydroxypregnenolone (17-OH), which is involved in cell adhesion and cell-cell interactions. Ligand binding causes a conformation change that triggers signaling via guanine nucleotide-binding proteins (G proteins) and modulates the activity of downstream effectors, such as RhoA pathway. ADGRG1 is coupled to G(12) and/or G(13) G proteins (GNA12 and GNA13, respectively) and mediates the activation Rho small GTPases. Acts as a potent suppressor of ferroptosis: binding to 17-OH-binding initiates signaling that down-regulates CD36 and alleviates ferroptosis-induced liver injury. Ligand-binding also induces cell adhesion activity via association with proteins such as collagen III/COL3A1 and TGM2. Mediates cell matrix adhesion in developing neurons and hematopoietic stem cells. Involved in cortical development, specifically in maintenance of the pial basement membrane integrity and in cortical lamination: association with COL3A1 in the developing brain inhibits neuronal migration via activation of the RhoA pathway. Together with TGM2, acts as a regulator of myelination and myelin repair in oligodendrocyte precursor cells. Acts as a hemostatic sensor of shear force: G protein-coupled receptor signaling is activated in response to shear force in platelets, promoting G(13) G protein signaling, and platelet shape change and aggregation in a COL3A1-dependent manner. Acts as an inhibitor of VEGFA production thereby inhibiting angiogenesis through a signaling pathway mediated by PRKCA. Plays a role in the maintenance of hematopoietic stem cells in bone marrow niche. Plays an essential role in testis development. This Pan troglodytes (Chimpanzee) protein is Adhesion G-protein coupled receptor G1 (ADGRG1).